We begin with the raw amino-acid sequence, 767 residues long: Integrin beta-8 (767 aa).

An N-terminal signal peptide occupies residues 1–21 (MCGSALAFLTAALLSLHNCQR). Over 22–681 (GPALVLGAAW…SECLSGPSYL (660 aa)) the chain is Extracellular. The PSI domain occupies 46-95 (RCGSANVVSCARCLQLGPECGWCVQEDFVSGGSGSERCDTVSSLISKGCP). Intrachain disulfides connect Cys47–Cys65, Cys55–Cys469, Cys58–Cys83, Cys68–Cys94, Cys211–Cys218, Cys266–Cys307, Cys407–Cys419, Cys439–Cys467, Cys471–Cys490, Cys471–Cys493, Cys481–Cys493, Cys498–Cys527, Cys510–Cys525, Cys519–Cys530, Cys532–Cys545, Cys552–Cys566, Cys560–Cys571, Cys573–Cys582, Cys584–Cys608, Cys592–Cys606, Cys600–Cys611, Cys613–Cys623, Cys626–Cys629, Cys633–Cys660, and Cys639–Cys656. In terms of domain architecture, VWFA spans 146–384 (PVDLYYLVDV…NLVVEAYKKI (239 aa)). Residues Asp154 and Ser156 each coordinate Mg(2+). Asp193 serves as a coordination point for Ca(2+). N-linked (GlcNAc...) asparagine glycosylation is present at Asn233. Positions 249, 251, 253, and 254 each coordinate Ca(2+). A Mg(2+)-binding site is contributed by Glu254. N-linked (GlcNAc...) asparagine glycosylation occurs at Asn402. Asn421, Asn431, and Asn456 each carry an N-linked (GlcNAc...) asparagine glycan. I-EGF domains are found at residues 471–494 (CENHRGLKGQCAEAAPDPKCPQCD), 498–546 (CHFD…QYCE), 547–583 (KDDFSCPYLHGDVCAGHGECEGGRCQCFSGWEGDRCQ), and 584–624 (CPSA…RLCE). Asn647 carries N-linked (GlcNAc...) asparagine glycosylation. The chain crosses the membrane as a helical span at residues 682-702 (RIFFIIFIVTFLIGLLKVLII). At 703–767 (RQVILQWNNN…NAQEAFRCNF (65 aa)) the chain is on the cytoplasmic side.

Belongs to the integrin beta chain family. Heterodimer of an alpha and a beta subunit. Beta-8 (ITGB8) associates with alpha-V (ITGAV) to form ITGAV:ITGB8. ITGAV:ITGB8 interacts with TGFB1.

It is found in the cell membrane. Functionally, integrin alpha-V:beta-8 (ITGAV:ITGB8) is a receptor for fibronectin. It recognizes the sequence R-G-D in its ligands. Integrin alpha-V:beta-6 (ITGAV:ITGB6) mediates R-G-D-dependent release of transforming growth factor beta-1 (TGF-beta-1) from regulatory Latency-associated peptide (LAP), thereby playing a key role in TGF-beta-1 activation on the surface of activated regulatory T-cells (Tregs). Required during vasculogenesis. The sequence is that of Integrin beta-8 from Mus musculus (Mouse).